We begin with the raw amino-acid sequence, 137 residues long: UPF0275 protein PM0489 (137 aa).

This sequence belongs to the UPF0275 family.

The sequence is that of UPF0275 protein PM0489 from Pasteurella multocida (strain Pm70).